We begin with the raw amino-acid sequence, 118 residues long: Elicitin (118 aa).

The N-terminal stretch at 1–20 (MNFRALFAATVAALVGSTSA) is a signal peptide. Cystine bridges form between cysteine 23–cysteine 91, cysteine 47–cysteine 76, and cysteine 71–cysteine 115.

It belongs to the elicitin family.

The protein resides in the secreted. Functionally, induces local and distal defense responses (incompatible hypersensitive reaction) in plants from the solanaceae and cruciferae families. Elicits leaf necrosis and causes the accumulation of pathogenesis-related proteins. Might interact with the lipidic molecules of the plasma membrane. This is Elicitin (PARA1) from Phytophthora nicotianae (Potato buckeye rot agent).